A 172-amino-acid chain; its full sequence is Lipoprotein signal peptidase (172 aa).

3 helical membrane passes run 10 to 30 (LIWLLLSALVVGLDQWSKAWV), 68 to 88 (WQLWFFTALAVGISGLLAFWL), and 98 to 118 (SALPYALVIGGAIGNVIDRLM). Active-site residues include Asp124 and Asp142. A helical transmembrane segment spans residues 138-158 (FNIADSAIVGGAIGIAVFGLF).

This sequence belongs to the peptidase A8 family.

It is found in the cell inner membrane. The enzyme catalyses Release of signal peptides from bacterial membrane prolipoproteins. Hydrolyzes -Xaa-Yaa-Zaa-|-(S,diacylglyceryl)Cys-, in which Xaa is hydrophobic (preferably Leu), and Yaa (Ala or Ser) and Zaa (Gly or Ala) have small, neutral side chains.. It participates in protein modification; lipoprotein biosynthesis (signal peptide cleavage). Its function is as follows. This protein specifically catalyzes the removal of signal peptides from prolipoproteins. This chain is Lipoprotein signal peptidase, found in Xanthomonas axonopodis pv. citri (strain 306).